Here is a 249-residue protein sequence, read N- to C-terminus: Solute carrier family 25 member 35 (249 aa).

2 Solcar repeats span residues 1–90 and 152–243; these read MDFL…AEAG and QSWK…LRMV. A run of 4 helical transmembrane segments spans residues 38-58, 59-79, 154-174, and 226-249; these read TYQR…KVDG, LAAL…MNGI, WKVA…AMTP, and LGPH…TYTK.

It belongs to the mitochondrial carrier (TC 2.A.29) family.

It localises to the mitochondrion inner membrane. It carries out the reaction a dicarboxylate(in) + sulfate(out) = a dicarboxylate(out) + sulfate(in). Functionally, putative antiporter that exchanges dicarboxylates and sulfur oxoanions across the inner membrane of mitochondria. In Bos taurus (Bovine), this protein is Solute carrier family 25 member 35 (SLC25A35).